The primary structure comprises 186 residues: NADH-quinone oxidoreductase subunit C (186 aa).

Residues 166 to 186 (DSLTPWKGVGRPSDPFDGRKE) are disordered.

The protein belongs to the complex I 30 kDa subunit family. NDH-1 is composed of 14 different subunits. Subunits NuoB, C, D, E, F, and G constitute the peripheral sector of the complex.

It is found in the cell inner membrane. The enzyme catalyses a quinone + NADH + 5 H(+)(in) = a quinol + NAD(+) + 4 H(+)(out). In terms of biological role, NDH-1 shuttles electrons from NADH, via FMN and iron-sulfur (Fe-S) centers, to quinones in the respiratory chain. The immediate electron acceptor for the enzyme in this species is believed to be ubiquinone. Couples the redox reaction to proton translocation (for every two electrons transferred, four hydrogen ions are translocated across the cytoplasmic membrane), and thus conserves the redox energy in a proton gradient. In Neorickettsia sennetsu (strain ATCC VR-367 / Miyayama) (Ehrlichia sennetsu), this protein is NADH-quinone oxidoreductase subunit C.